A 333-amino-acid polypeptide reads, in one-letter code: Ornithine carbamoyltransferase (333 aa).

Carbamoyl phosphate-binding positions include serine 56 to threonine 59, arginine 107, and histidine 134 to glutamine 137. L-ornithine contacts are provided by residues asparagine 167, aspartate 231, and serine 235–methionine 236. Residues cysteine 273–leucine 274 and arginine 318 contribute to the carbamoyl phosphate site.

It belongs to the aspartate/ornithine carbamoyltransferase superfamily. OTCase family.

The protein localises to the cytoplasm. The catalysed reaction is carbamoyl phosphate + L-ornithine = L-citrulline + phosphate + H(+). It participates in amino-acid degradation; L-arginine degradation via ADI pathway; carbamoyl phosphate from L-arginine: step 2/2. Its function is as follows. Reversibly catalyzes the transfer of the carbamoyl group from carbamoyl phosphate (CP) to the N(epsilon) atom of ornithine (ORN) to produce L-citrulline. This Clostridium botulinum (strain Kyoto / Type A2) protein is Ornithine carbamoyltransferase.